The sequence spans 187 residues: V-type ATP synthase subunit E (187 aa).

The protein belongs to the V-ATPase E subunit family.

Produces ATP from ADP in the presence of a proton gradient across the membrane. The polypeptide is V-type ATP synthase subunit E (Geotalea uraniireducens (strain Rf4) (Geobacter uraniireducens)).